A 156-amino-acid chain; its full sequence is Ribonuclease pancreatic (156 aa).

The signal sequence occupies residues methionine 1–glycine 28. Substrate-binding residues include lysine 35 and arginine 38. Histidine 40 serves as the catalytic Proton acceptor. Cystine bridges form between cysteine 54–cysteine 112, cysteine 68–cysteine 123, cysteine 86–cysteine 138, and cysteine 93–cysteine 100. Asparagine 62 is a glycosylation site (N-linked (GlcNAc...) asparagine). Lysine 69–threonine 73 contributes to the substrate binding site. Asparagine 90 carries N-linked (GlcNAc...) asparagine glycosylation. Lysine 94 serves as a coordination point for substrate. Asparagine 104 carries an N-linked (GlcNAc...) asparagine glycan. Arginine 113 provides a ligand contact to substrate. Histidine 147 (proton donor) is an active-site residue.

This sequence belongs to the pancreatic ribonuclease family. In terms of assembly, monomer. Interacts with and forms tight 1:1 complexes with RNH1. Dimerization of two such complexes may occur. Interaction with RNH1 inhibits this protein.

Its subcellular location is the secreted. It carries out the reaction an [RNA] containing cytidine + H2O = an [RNA]-3'-cytidine-3'-phosphate + a 5'-hydroxy-ribonucleotide-3'-[RNA].. The catalysed reaction is an [RNA] containing uridine + H2O = an [RNA]-3'-uridine-3'-phosphate + a 5'-hydroxy-ribonucleotide-3'-[RNA].. In terms of biological role, endonuclease that catalyzes the cleavage of RNA on the 3' side of pyrimidine nucleotides. Acts on single-stranded and double-stranded RNA. The sequence is that of Ribonuclease pancreatic (RNASE1) from Lemur catta (Ring-tailed lemur).